The following is a 156-amino-acid chain: Ribosomal RNA large subunit methyltransferase H (156 aa).

S-adenosyl-L-methionine contacts are provided by residues L72, G104, and 123–128 (LGKMVW).

Belongs to the RNA methyltransferase RlmH family. Homodimer.

It is found in the cytoplasm. The catalysed reaction is pseudouridine(1915) in 23S rRNA + S-adenosyl-L-methionine = N(3)-methylpseudouridine(1915) in 23S rRNA + S-adenosyl-L-homocysteine + H(+). Specifically methylates the pseudouridine at position 1915 (m3Psi1915) in 23S rRNA. The protein is Ribosomal RNA large subunit methyltransferase H of Roseobacter denitrificans (strain ATCC 33942 / OCh 114) (Erythrobacter sp. (strain OCh 114)).